The sequence spans 602 residues: Sensor histidine kinase AtsR (602 aa).

The next 2 helical transmembrane spans lie at 11 to 31 (IIVALGSLWILGFAAWAFLLF) and 182 to 202 (AIVMLGGVLGVILGALFLLLF). Residues 242–461 (MVSHELRTPL…EFVVTLPVEL (220 aa)) form the Histidine kinase domain. His245 bears the Phosphohistidine; by autocatalysis mark. The region spanning 484–601 (HALVVDDNEN…TLNGIVSRLR (118 aa)) is the Response regulatory domain. Asp533 is subject to 4-aspartylphosphate.

It localises to the cell inner membrane. It carries out the reaction ATP + protein L-histidine = ADP + protein N-phospho-L-histidine.. In terms of biological role, member of a two-component regulatory system involved in control of gene expression; inhibits synthesis of (at least) the polyketide antibiotic thailandamide. Its two-component partner may be BTH_I0635. In Burkholderia thailandensis (strain ATCC 700388 / DSM 13276 / CCUG 48851 / CIP 106301 / E264), this protein is Sensor histidine kinase AtsR.